A 112-amino-acid chain; its full sequence is MKKVLFLLLACAAVAFAAETNAPVEQEAINVWIKAFSVLAAGLGLGVAALGGAIGMGNTAAATIAGTARNPGLGPKLMTTMFIALAMIEAQVIYALVIALIALYANPFIVLQ.

Helical transmembrane passes span Phe-36–Met-56 and Met-81–Ile-101.

This sequence belongs to the ATPase C chain family. In terms of assembly, F-type ATPases have 2 components, F(1) - the catalytic core - and F(0) - the membrane proton channel. F(1) has five subunits: alpha(3), beta(3), gamma(1), delta(1), epsilon(1). F(0) has three main subunits: a(1), b(2) and c(10-14). The alpha and beta chains form an alternating ring which encloses part of the gamma chain. F(1) is attached to F(0) by a central stalk formed by the gamma and epsilon chains, while a peripheral stalk is formed by the delta and b chains.

The protein localises to the cell inner membrane. F(1)F(0) ATP synthase produces ATP from ADP in the presence of a proton or sodium gradient. F-type ATPases consist of two structural domains, F(1) containing the extramembraneous catalytic core and F(0) containing the membrane proton channel, linked together by a central stalk and a peripheral stalk. During catalysis, ATP synthesis in the catalytic domain of F(1) is coupled via a rotary mechanism of the central stalk subunits to proton translocation. Its function is as follows. Key component of the F(0) channel; it plays a direct role in translocation across the membrane. A homomeric c-ring of between 10-14 subunits forms the central stalk rotor element with the F(1) delta and epsilon subunits. The protein is ATP synthase subunit c of Campylobacter jejuni subsp. jejuni serotype O:6 (strain 81116 / NCTC 11828).